The sequence spans 428 residues: Serine--tRNA ligase (428 aa).

T235–E237 is an L-serine binding site. R266–E268 serves as a coordination point for ATP. E289 serves as a coordination point for L-serine. E353–S356 lines the ATP pocket. S389 lines the L-serine pocket.

Belongs to the class-II aminoacyl-tRNA synthetase family. Type-1 seryl-tRNA synthetase subfamily. As to quaternary structure, homodimer. The tRNA molecule binds across the dimer.

The protein localises to the cytoplasm. The enzyme catalyses tRNA(Ser) + L-serine + ATP = L-seryl-tRNA(Ser) + AMP + diphosphate + H(+). The catalysed reaction is tRNA(Sec) + L-serine + ATP = L-seryl-tRNA(Sec) + AMP + diphosphate + H(+). Its pathway is aminoacyl-tRNA biosynthesis; selenocysteinyl-tRNA(Sec) biosynthesis; L-seryl-tRNA(Sec) from L-serine and tRNA(Sec): step 1/1. In terms of biological role, catalyzes the attachment of serine to tRNA(Ser). Is also able to aminoacylate tRNA(Sec) with serine, to form the misacylated tRNA L-seryl-tRNA(Sec), which will be further converted into selenocysteinyl-tRNA(Sec). The chain is Serine--tRNA ligase from Shewanella baltica (strain OS223).